The sequence spans 60 residues: uncharacterized protein (60 aa).

A helical transmembrane segment spans residues 38-58 (SILAGGIIPVLFFFPLFLFLY).

The protein localises to the membrane. This is an uncharacterized protein from Saccharomyces cerevisiae (strain ATCC 204508 / S288c) (Baker's yeast).